Consider the following 52-residue polypeptide: UPF0391 membrane protein ACIAD3602 (52 aa).

The next 2 membrane-spanning stretches (helical) occupy residues 6–26 and 30–50; these read IIFA…VAGL and FAVI…ISRG.

This sequence belongs to the UPF0391 family.

It localises to the cell membrane. In Acinetobacter baylyi (strain ATCC 33305 / BD413 / ADP1), this protein is UPF0391 membrane protein ACIAD3602.